The sequence spans 253 residues: U1 small nuclear ribonucleoprotein A (253 aa).

In terms of domain architecture, RRM 1 spans 23-102; the sequence is VTIYINNLNE…KPMRIQYAKT (80 aa). The disordered stretch occupies residues 111-140; it reads DGTFVPRERRKRNDEKPEKKQKREQHHDVS. The 75-residue stretch at 179-253 folds into the RRM 2 domain; it reads NILFVQNLPH…NQMLISYAKK (75 aa).

It belongs to the RRM U1 A/B'' family. Component of the spliceosome where it is associated with snRNP U1.

It is found in the nucleus. The protein resides in the nucleolus. Functionally, involved in nuclear pre-mRNA splicing. The protein is U1 small nuclear ribonucleoprotein A of Oryza sativa subsp. indica (Rice).